A 471-amino-acid chain; its full sequence is 3-isopropylmalate dehydratase large subunit (471 aa).

Positions 347, 407, and 410 each coordinate [4Fe-4S] cluster.

This sequence belongs to the aconitase/IPM isomerase family. LeuC type 1 subfamily. In terms of assembly, heterodimer of LeuC and LeuD. [4Fe-4S] cluster is required as a cofactor.

It catalyses the reaction (2R,3S)-3-isopropylmalate = (2S)-2-isopropylmalate. Its pathway is amino-acid biosynthesis; L-leucine biosynthesis; L-leucine from 3-methyl-2-oxobutanoate: step 2/4. Its function is as follows. Catalyzes the isomerization between 2-isopropylmalate and 3-isopropylmalate, via the formation of 2-isopropylmaleate. This is 3-isopropylmalate dehydratase large subunit from Edwardsiella ictaluri (strain 93-146).